We begin with the raw amino-acid sequence, 314 residues long: Phospho-N-acetylmuramoyl-pentapeptide-transferase (314 aa).

The next 10 membrane-spanning stretches (helical) occupy residues 4-24 (LIFY…PIFI), 52-72 (TMGG…TYFI), 77-97 (LFLI…LDDY), 111-131 (IQKL…ISIF), 146-166 (LDLK…MSNA), 169-189 (LTDG…LFTA), 191-211 (IAGI…AYLF), 219-239 (IFMG…LALY), 242-262 (VELF…SVII), and 294-314 (IVLI…GGVL).

This sequence belongs to the glycosyltransferase 4 family. MraY subfamily. Requires Mg(2+) as cofactor.

The protein localises to the cell inner membrane. It carries out the reaction UDP-N-acetyl-alpha-D-muramoyl-L-alanyl-gamma-D-glutamyl-meso-2,6-diaminopimeloyl-D-alanyl-D-alanine + di-trans,octa-cis-undecaprenyl phosphate = di-trans,octa-cis-undecaprenyl diphospho-N-acetyl-alpha-D-muramoyl-L-alanyl-D-glutamyl-meso-2,6-diaminopimeloyl-D-alanyl-D-alanine + UMP. It functions in the pathway cell wall biogenesis; peptidoglycan biosynthesis. Its function is as follows. Catalyzes the initial step of the lipid cycle reactions in the biosynthesis of the cell wall peptidoglycan: transfers peptidoglycan precursor phospho-MurNAc-pentapeptide from UDP-MurNAc-pentapeptide onto the lipid carrier undecaprenyl phosphate, yielding undecaprenyl-pyrophosphoryl-MurNAc-pentapeptide, known as lipid I. The chain is Phospho-N-acetylmuramoyl-pentapeptide-transferase from Petrotoga mobilis (strain DSM 10674 / SJ95).